The primary structure comprises 554 residues: DNA ligase (554 aa).

Residue Glu253 participates in ATP binding. Lys255 acts as the N6-AMP-lysine intermediate in catalysis. The ATP site is built by Arg260, Arg275, Glu304, Phe344, Arg418, and Lys424.

This sequence belongs to the ATP-dependent DNA ligase family. Mg(2+) serves as cofactor.

The catalysed reaction is ATP + (deoxyribonucleotide)n-3'-hydroxyl + 5'-phospho-(deoxyribonucleotide)m = (deoxyribonucleotide)n+m + AMP + diphosphate.. Its function is as follows. DNA ligase that seals nicks in double-stranded DNA during DNA replication, DNA recombination and DNA repair. The polypeptide is DNA ligase (Haloarcula marismortui (strain ATCC 43049 / DSM 3752 / JCM 8966 / VKM B-1809) (Halobacterium marismortui)).